The sequence spans 2005 residues: Structural maintenance of chromosomes flexible hinge domain-containing protein 1 (2005 aa).

A compositionally biased stretch (gly residues) spans 1–13; sequence MAAADGGGPGGAS. The interval 1–23 is disordered; sequence MAAADGGGPGGASVGTEEDGGGV. N-acetylalanine is present on Ala2. Residues 111–702 are ATPase activity domain; sequence TKERIDFLPH…LSVTWPEGDE (592 aa). An N6-acetyllysine modification is found at Lys1349. Glycyl lysine isopeptide (Lys-Gly) (interchain with G-Cter in SUMO2) cross-links involve residues Lys1374 and Lys1496. Thr1499 carries the phosphothreonine modification. The region spanning 1720-1847 is the SMC hinge domain; the sequence is GDVLGKIAHL…DNLDAANHYR (128 aa). Lys1802 is modified (N6-succinyllysine). The residue at position 1974 (Ser1974) is a Phosphoserine.

The protein belongs to the SMC family. Highly divergent. As to quaternary structure, homodimer; homodimerizes via its SMC hinge domain. Interacts with LRIF1. Post-translationally, sumoylated with SUMO1.

The protein resides in the chromosome. The catalysed reaction is ATP + H2O = ADP + phosphate + H(+). Its function is as follows. Non-canonical member of the structural maintenance of chromosomes (SMC) protein family that plays a key role in epigenetic silencing by regulating chromatin architecture. Promotes heterochromatin formation in both autosomes and chromosome X, probably by mediating the merge of chromatin compartments. Plays a key role in chromosome X inactivation in females by promoting the spreading of heterochromatin. Recruited to inactivated chromosome X by Xist RNA and acts by mediating the merge of chromatin compartments: promotes random chromatin interactions that span the boundaries of existing structures, leading to create a compartment-less architecture typical of inactivated chromosome X. Required to facilitate Xist RNA spreading. Also required for silencing of a subset of clustered autosomal loci in somatic cells, such as the DUX4 locus. Has ATPase activity; may participate in structural manipulation of chromatin in an ATP-dependent manner as part of its role in gene expression regulation. Also plays a role in DNA repair: localizes to sites of DNA double-strand breaks in response to DNA damage to promote the repair of DNA double-strand breaks. Acts by promoting non-homologous end joining (NHEJ) and inhibiting homologous recombination (HR) repair. The polypeptide is Structural maintenance of chromosomes flexible hinge domain-containing protein 1 (Homo sapiens (Human)).